The chain runs to 275 residues: Large ribosomal subunit protein uL2 (275 aa).

A disordered region spans residues 223–275 (VAMNPVDHPHGGGEGRTSGGRHPVSPWGQPTKGYKTRSNKRTDKYIVRRRNKK).

Belongs to the universal ribosomal protein uL2 family. As to quaternary structure, part of the 50S ribosomal subunit. Forms a bridge to the 30S subunit in the 70S ribosome.

Functionally, one of the primary rRNA binding proteins. Required for association of the 30S and 50S subunits to form the 70S ribosome, for tRNA binding and peptide bond formation. It has been suggested to have peptidyltransferase activity; this is somewhat controversial. Makes several contacts with the 16S rRNA in the 70S ribosome. The chain is Large ribosomal subunit protein uL2 from Shewanella halifaxensis (strain HAW-EB4).